The following is a 49-amino-acid chain: Large ribosomal subunit protein bL33A (49 aa).

Belongs to the bacterial ribosomal protein bL33 family.

The protein is Large ribosomal subunit protein bL33A of Staphylococcus aureus (strain COL).